The sequence spans 372 residues: Methylthioribose-1-phosphate isomerase 1 (372 aa).

The Proton donor role is filled by Asp254.

It belongs to the eIF-2B alpha/beta/delta subunits family. MtnA subfamily.

The protein localises to the cytoplasm. It localises to the nucleus. It catalyses the reaction 5-(methylsulfanyl)-alpha-D-ribose 1-phosphate = 5-(methylsulfanyl)-D-ribulose 1-phosphate. Its pathway is amino-acid biosynthesis; L-methionine biosynthesis via salvage pathway; L-methionine from S-methyl-5-thio-alpha-D-ribose 1-phosphate: step 1/6. In terms of biological role, catalyzes the interconversion of methylthioribose-1-phosphate (MTR-1-P) into methylthioribulose-1-phosphate (MTRu-1-P). This chain is Methylthioribose-1-phosphate isomerase 1, found in Trypanosoma cruzi (strain CL Brener).